Consider the following 279-residue polypeptide: Tryptophan synthase alpha chain (279 aa).

Catalysis depends on proton acceptor residues E50 and D61.

Belongs to the TrpA family. As to quaternary structure, tetramer of two alpha and two beta chains.

The enzyme catalyses (1S,2R)-1-C-(indol-3-yl)glycerol 3-phosphate + L-serine = D-glyceraldehyde 3-phosphate + L-tryptophan + H2O. Its pathway is amino-acid biosynthesis; L-tryptophan biosynthesis; L-tryptophan from chorismate: step 5/5. In terms of biological role, the alpha subunit is responsible for the aldol cleavage of indoleglycerol phosphate to indole and glyceraldehyde 3-phosphate. This chain is Tryptophan synthase alpha chain, found in Azorhizobium caulinodans (strain ATCC 43989 / DSM 5975 / JCM 20966 / LMG 6465 / NBRC 14845 / NCIMB 13405 / ORS 571).